The sequence spans 301 residues: Inactive C-alpha-formylglycine-generating enzyme 2 (301 aa).

A signal peptide spans 1–25; it reads MGISLSPLLTVLSLLSGRWLELGNG. A disulfide bridge links Cys156 with Cys290. Residue Asn191 is glycosylated (N-linked (GlcNAc...) asparagine). 8 residues coordinate Ca(2+): Asn194, Leu195, Asp208, Phe210, Asp229, Gly232, Val234, and Glu236. The span at 274-284 shows a compositional bias: polar residues; sequence RMGNTPDSASD. The segment at 274-301 is disordered; it reads RMGNTPDSASDNLGFRCASGAGRPPGEL. The Non-canonical ER retention motif signature appears at 298–301; sequence PGEL.

Belongs to the sulfatase-modifying factor family. In terms of assembly, homodimer and heterodimer with SUMF1.

Its subcellular location is the endoplasmic reticulum lumen. In terms of biological role, lacks formylglycine generating activity and is unable to convert newly synthesized inactive sulfatases to their active form. Inhibits the activation of sulfatases by SUMF1. In Bos taurus (Bovine), this protein is Inactive C-alpha-formylglycine-generating enzyme 2.